A 629-amino-acid chain; its full sequence is tRNA uridine 5-carboxymethylaminomethyl modification enzyme MnmG (629 aa).

13–18 (GGGHAG) is an FAD binding site. 273 to 287 (GPRYCPSIEDKIHRF) serves as a coordination point for NAD(+).

The protein belongs to the MnmG family. Homodimer. Heterotetramer of two MnmE and two MnmG subunits. FAD serves as cofactor.

Its subcellular location is the cytoplasm. NAD-binding protein involved in the addition of a carboxymethylaminomethyl (cmnm) group at the wobble position (U34) of certain tRNAs, forming tRNA-cmnm(5)s(2)U34. The sequence is that of tRNA uridine 5-carboxymethylaminomethyl modification enzyme MnmG from Shewanella amazonensis (strain ATCC BAA-1098 / SB2B).